Consider the following 272-residue polypeptide: Bis(5'-nucleosyl)-tetraphosphatase, symmetrical (272 aa).

Belongs to the Ap4A hydrolase family.

The enzyme catalyses P(1),P(4)-bis(5'-adenosyl) tetraphosphate + H2O = 2 ADP + 2 H(+). In terms of biological role, hydrolyzes diadenosine 5',5'''-P1,P4-tetraphosphate to yield ADP. The chain is Bis(5'-nucleosyl)-tetraphosphatase, symmetrical from Glaesserella parasuis serovar 5 (strain SH0165) (Haemophilus parasuis).